Consider the following 126-residue polypeptide: Prefoldin subunit beta (126 aa).

This sequence belongs to the prefoldin subunit beta family. As to quaternary structure, heterohexamer of two alpha and four beta subunits.

It localises to the cytoplasm. Functionally, molecular chaperone capable of stabilizing a range of proteins. Seems to fulfill an ATP-independent, HSP70-like function in archaeal de novo protein folding. The sequence is that of Prefoldin subunit beta from Methanocella arvoryzae (strain DSM 22066 / NBRC 105507 / MRE50).